Here is a 126-residue protein sequence, read N- to C-terminus: Fumarate reductase subunit C (126 aa).

Helical transmembrane passes span 30 to 50 (IFVAWFVLYLVLVLRAVGAGG), 64 to 84 (VVVVLNVVALSFLLLHAVTWF), and 105 to 125 (VLAGHYAAWLVVSVIVAWMVL).

Belongs to the FrdC family. As to quaternary structure, part of an enzyme complex containing four subunits: a flavoprotein (FrdA), an iron-sulfur protein (FrdB), and two hydrophobic anchor proteins (FrdC and FrdD).

The protein localises to the cell membrane. Its function is as follows. Anchors the catalytic components of the fumarate reductase complex to the cell membrane, binds quinones. The sequence is that of Fumarate reductase subunit C from Mycobacterium tuberculosis (strain CDC 1551 / Oshkosh).